The following is a 427-amino-acid chain: Trigger factor (427 aa).

One can recognise a PPIase FKBP-type domain in the interval 163–248; the sequence is GDTVILDFEG…LHEIKTKEVP (86 aa).

The protein belongs to the FKBP-type PPIase family. Tig subfamily.

The protein resides in the cytoplasm. It carries out the reaction [protein]-peptidylproline (omega=180) = [protein]-peptidylproline (omega=0). Involved in protein export. Acts as a chaperone by maintaining the newly synthesized protein in an open conformation. Functions as a peptidyl-prolyl cis-trans isomerase. The chain is Trigger factor from Listeria monocytogenes serotype 4b (strain CLIP80459).